A 98-amino-acid chain; its full sequence is Protein E7 (98 aa).

The tract at residues 1-42 (MHGRHVTLKDIVLDLQPPDPVGLHCYEQLVDSSEDEVDEVDG) is E7 terminal domain. The LXCXE motif; interaction with host RB1 and TMEM173/STING motif lies at 23 to 27 (LHCYE). A zinc finger spans residues 58–94 (CCGCDSNVRLVVQCTETDIREVQQLLLGTLDIVCPIC). Residues 76 to 84 (IREVQQLLL) carry the Nuclear export signal motif.

The protein belongs to the papillomaviridae E7 protein family. Homodimer. Homooligomer. Interacts with host RB1; this interaction induces dissociation of RB1-E2F1 complex thereby disrupting RB1 activity. Interacts with host EP300; this interaction represses EP300 transcriptional activity. Interacts with protein E2; this interaction inhibits E7 oncogenic activity. Interacts with host TMEM173/STING; this interaction impairs the ability of TMEM173/STING to sense cytosolic DNA and promote the production of type I interferon (IFN-alpha and IFN-beta). Post-translationally, highly phosphorylated.

The protein resides in the host cytoplasm. Its subcellular location is the host nucleus. Its function is as follows. Plays a role in viral genome replication by driving entry of quiescent cells into the cell cycle. Stimulation of progression from G1 to S phase allows the virus to efficiently use the cellular DNA replicating machinery to achieve viral genome replication. E7 protein has both transforming and trans-activating activities. Induces the disassembly of the E2F1 transcription factor from RB1, with subsequent transcriptional activation of E2F1-regulated S-phase genes. Interferes with host histone deacetylation mediated by HDAC1 and HDAC2, leading to transcription activation. Also plays a role in the inhibition of both antiviral and antiproliferative functions of host interferon alpha. Interaction with host TMEM173/STING impairs the ability of TMEM173/STING to sense cytosolic DNA and promote the production of type I interferon (IFN-alpha and IFN-beta). The protein is Protein E7 of Homo sapiens (Human).